Here is a 117-residue protein sequence, read N- to C-terminus: Large ribosomal subunit protein bL17 (117 aa).

The protein belongs to the bacterial ribosomal protein bL17 family. As to quaternary structure, part of the 50S ribosomal subunit. Contacts protein L32.

In Campylobacter jejuni subsp. jejuni serotype O:6 (strain 81116 / NCTC 11828), this protein is Large ribosomal subunit protein bL17.